A 270-amino-acid polypeptide reads, in one-letter code: tRNA pseudouridine synthase A (270 aa).

The active-site Nucleophile is Asp-60. The tract at residues 107-111 (FHARF) is RNA binding. Tyr-118 is a binding site for substrate. The interaction with tRNA stretch occupies residues 168 to 172 (QCQSR).

Belongs to the tRNA pseudouridine synthase TruA family. As to quaternary structure, homodimer.

It catalyses the reaction uridine(38/39/40) in tRNA = pseudouridine(38/39/40) in tRNA. Functionally, formation of pseudouridine at positions 38, 39 and 40 in the anticodon stem and loop of transfer RNAs. The sequence is that of tRNA pseudouridine synthase A from Shigella boydii serotype 18 (strain CDC 3083-94 / BS512).